Reading from the N-terminus, the 36-residue chain is NAAAEIFRIAAVMNGLTLVGVAIGFVLLRIEATVEE.

At 1 to 5 the chain is on the lumenal side; it reads NAAAE. The helical transmembrane segment at 6 to 28 threads the bilayer; the sequence is IFRIAAVMNGLTLVGVAIGFVLL. Over 29–36 the chain is Stromal; sequence RIEATVEE.

This sequence belongs to the PetM family. In terms of assembly, the 4 large subunits of the cytochrome b6-f complex are cytochrome b6, subunit IV (17 kDa polypeptide, PetD), cytochrome f and the Rieske protein, while the 4 small subunits are PetG, PetL, PetM and PetN. The complex functions as a dimer.

The protein resides in the plastid. It is found in the chloroplast thylakoid membrane. Functionally, component of the cytochrome b6-f complex, which mediates electron transfer between photosystem II (PSII) and photosystem I (PSI), cyclic electron flow around PSI, and state transitions. The protein is Cytochrome b6-f complex subunit 7 of Spinacia oleracea (Spinach).